Consider the following 251-residue polypeptide: Probable transcriptional regulatory protein NFA_37020 (251 aa).

This sequence belongs to the TACO1 family.

It localises to the cytoplasm. The sequence is that of Probable transcriptional regulatory protein NFA_37020 from Nocardia farcinica (strain IFM 10152).